A 169-amino-acid polypeptide reads, in one-letter code: S-ribosylhomocysteine lyase (169 aa).

3 residues coordinate Fe cation: His54, His58, and Cys128.

The protein belongs to the LuxS family. In terms of assembly, homodimer. Fe cation is required as a cofactor.

The enzyme catalyses S-(5-deoxy-D-ribos-5-yl)-L-homocysteine = (S)-4,5-dihydroxypentane-2,3-dione + L-homocysteine. Its function is as follows. Involved in the synthesis of autoinducer 2 (AI-2) which is secreted by bacteria and is used to communicate both the cell density and the metabolic potential of the environment. The regulation of gene expression in response to changes in cell density is called quorum sensing. Catalyzes the transformation of S-ribosylhomocysteine (RHC) to homocysteine (HC) and 4,5-dihydroxy-2,3-pentadione (DPD). The chain is S-ribosylhomocysteine lyase from Shewanella piezotolerans (strain WP3 / JCM 13877).